A 619-amino-acid chain; its full sequence is MDYKQRIEKFKDILNSEEPISLPGLCSLCIQGIPDEYSLRAKAWMLMLEFLPTDRSNWQSVLEKHRKTYTSFVQELLIDPWRKLTLHEESGENSDHPLNTSDDSKWKEYFDDNQILEQIDKDIRRTLPDLSFFQGKSEINKKPSVNNVSENISVNTEDDKVEEVGQKLNYTKITSIDQSQETPVHLSTIDFSKFQEECHLVLQGRIYRLENESTSSSTTALSTPRQSMDSKRTINAEAIAGENKLGLHREAAERILFIYAKLNPGIGYVQGMNEILAPLYYVLATDPTYENYYLCECDAFFLFTQMMVQVRDLYEKTLDHDSDHGIHFLMSKFTERLKKYDYELWENLEEKQIHPTYYSFRWFTCLLSQEFPLPDVIRLWDSIIADQMKARLFGKNDDGFNGAYDFLMDFCCSILIELRESILERNFADSIKLLQAHFNVDMPKLLNLTFELQHLRKTSKNDEDMSYVRKNSYNTNALANSLKNRVLSTYNTVKANVPQSSSSYTDNNKQKEPLEEKRSFFPSFRSSLDGVSPTQGRKSGEENIRTIFAKPTAHIGENGWSNLKVKGSSIFQRFGNFVGDTMRYITEEEESSEEEDLTTSRRKIGITSKRKVSVKRNVI.

The Rab-GAP TBC domain maps to 34–387 (PDEYSLRAKA…RLWDSIIADQ (354 aa)).

The protein resides in the cytoplasm. Functionally, may act as a GTPase-activating protein for Rab family protein(s). The sequence is that of TBC domain-containing protein C1952.17c from Schizosaccharomyces pombe (strain 972 / ATCC 24843) (Fission yeast).